An 89-amino-acid chain; its full sequence is Small ribosomal subunit protein uS15 (89 aa).

The protein belongs to the universal ribosomal protein uS15 family. In terms of assembly, part of the 30S ribosomal subunit. Forms a bridge to the 50S subunit in the 70S ribosome, contacting the 23S rRNA.

In terms of biological role, one of the primary rRNA binding proteins, it binds directly to 16S rRNA where it helps nucleate assembly of the platform of the 30S subunit by binding and bridging several RNA helices of the 16S rRNA. Forms an intersubunit bridge (bridge B4) with the 23S rRNA of the 50S subunit in the ribosome. This Dinoroseobacter shibae (strain DSM 16493 / NCIMB 14021 / DFL 12) protein is Small ribosomal subunit protein uS15.